Consider the following 464-residue polypeptide: GTPase Der (464 aa).

2 consecutive EngA-type G domains span residues P3–S166 and L177–T350. Residues G9–S16, D56–I60, N118–D121, G183–S190, D230–V234, and N295–D298 contribute to the GTP site. A KH-like domain is found at E351–D435.

Belongs to the TRAFAC class TrmE-Era-EngA-EngB-Septin-like GTPase superfamily. EngA (Der) GTPase family. In terms of assembly, associates with the 50S ribosomal subunit.

Its function is as follows. GTPase that plays an essential role in the late steps of ribosome biogenesis. This is GTPase Der from Teredinibacter turnerae (strain ATCC 39867 / T7901).